Reading from the N-terminus, the 188-residue chain is Elongation factor P (188 aa).

This sequence belongs to the elongation factor P family.

The protein localises to the cytoplasm. It functions in the pathway protein biosynthesis; polypeptide chain elongation. In terms of biological role, involved in peptide bond synthesis. Stimulates efficient translation and peptide-bond synthesis on native or reconstituted 70S ribosomes in vitro. Probably functions indirectly by altering the affinity of the ribosome for aminoacyl-tRNA, thus increasing their reactivity as acceptors for peptidyl transferase. The protein is Elongation factor P of Nitrobacter hamburgensis (strain DSM 10229 / NCIMB 13809 / X14).